The chain runs to 327 residues: Poly(ribitol-phosphate) beta-N-acetylglucosaminyltransferase TarP (327 aa).

Residues Pro-9, Asp-41, Asn-68, Arg-76, and 92–94 (DSD) contribute to the UDP-N-acetyl-alpha-D-glucosamine site. Asp-94 is a binding site for Mn(2+). Asp-181 serves as the catalytic Proton acceptor.

The protein belongs to the glycosyltransferase 2 family. In terms of assembly, homotrimer. Mn(2+) serves as cofactor.

It catalyses the reaction 4-O-[(D-ribitylphospho)(n)-di{(2R)-glycerylphospho}]-N-acetyl-beta-D-mannosaminyl-(1-&gt;4)-N-acetyl-alpha-D-glucosaminyl di-trans,octa-cis-undecaprenyl diphosphate + n UDP-N-acetyl-alpha-D-glucosamine = 4-O-([3-N-acetyl-beta-D-glucosaminyl-1-D-ribitylphospho](n)-di{[2R]-1-glycerylphospho})-N-acetyl-beta-D-mannosaminyl-(1-&gt;4)-N-acetyl-alpha-D-glucosaminyl di-trans,octa-cis-undecaprenyl diphosphate + n UDP + n H(+). The protein operates within cell wall biogenesis; poly(ribitol phosphate) teichoic acid biosynthesis. In terms of biological role, attaches beta-O-GlcNAc (beta-O-N-acetyl-D-glucosamine) residues to the C3 position of poly(RboP)-wall teichoic acids (WTAs). Attenuates immunogenicity of WTA and protects S.aureus against adaptative host defenses by allowing bacteria to evade recognition by preexisting anti-S.aureus antibodies. Also protects the cell from podophage infection. This chain is Poly(ribitol-phosphate) beta-N-acetylglucosaminyltransferase TarP, found in Staphylococcus aureus (strain N315).